Consider the following 445-residue polypeptide: UDP-N-acetylmuramoylalanine--D-glutamate ligase (445 aa).

Glycine 117–threonine 123 serves as a coordination point for ATP.

This sequence belongs to the MurCDEF family.

The protein resides in the cytoplasm. It carries out the reaction UDP-N-acetyl-alpha-D-muramoyl-L-alanine + D-glutamate + ATP = UDP-N-acetyl-alpha-D-muramoyl-L-alanyl-D-glutamate + ADP + phosphate + H(+). It participates in cell wall biogenesis; peptidoglycan biosynthesis. In terms of biological role, cell wall formation. Catalyzes the addition of glutamate to the nucleotide precursor UDP-N-acetylmuramoyl-L-alanine (UMA). In Neisseria meningitidis serogroup B (strain ATCC BAA-335 / MC58), this protein is UDP-N-acetylmuramoylalanine--D-glutamate ligase.